Consider the following 35-residue polypeptide: Entry-fusion complex protein OPG076 (35 aa).

The chain crosses the membrane as a helical span at residues 2 to 22 (LVVIMFFIAFAFCSWLSYSYL). Residues 23-35 (RPYISTKELNKSR) are Virion surface-facing.

This sequence belongs to the orthopoxvirus OPG076 family. As to quaternary structure, component of the entry fusion complex (EFC) composed of OPG053, OPG076, OPG086, OPG094, OPG095, OPG099, OPG107, OPG143, OPG104, OPG147 and OPG155. Except for OPG095 and OPG053, each of the EFC proteins is required for assembly or stability of the complex. In terms of processing, unglycosylated because produced in viral factories instead of the classic ER -Golgi route.

It is found in the virion membrane. Functionally, component of the entry fusion complex (EFC), which consists of 11 proteins. During cell infection, this complex mediates entry of the virion core into the host cytoplasm by a two-step mechanism consisting of lipid mixing of the viral and cellular membranes and subsequent pore formation. This Vaccinia virus (strain Copenhagen) (VACV) protein is Entry-fusion complex protein OPG076 (OPG076).